A 406-amino-acid chain; its full sequence is Serine hydroxymethyltransferase (406 aa).

(6S)-5,6,7,8-tetrahydrofolate contacts are provided by residues leucine 111 and 115–117 (GHL). An N6-(pyridoxal phosphate)lysine modification is found at lysine 220.

The protein belongs to the SHMT family. In terms of assembly, homodimer. The cofactor is pyridoxal 5'-phosphate.

The protein localises to the cytoplasm. It carries out the reaction (6R)-5,10-methylene-5,6,7,8-tetrahydrofolate + glycine + H2O = (6S)-5,6,7,8-tetrahydrofolate + L-serine. The protein operates within one-carbon metabolism; tetrahydrofolate interconversion. It functions in the pathway amino-acid biosynthesis; glycine biosynthesis; glycine from L-serine: step 1/1. Catalyzes the reversible interconversion of serine and glycine with tetrahydrofolate (THF) serving as the one-carbon carrier. This reaction serves as the major source of one-carbon groups required for the biosynthesis of purines, thymidylate, methionine, and other important biomolecules. Also exhibits THF-independent aldolase activity toward beta-hydroxyamino acids, producing glycine and aldehydes, via a retro-aldol mechanism. The sequence is that of Serine hydroxymethyltransferase from Mycoplasma pneumoniae (strain ATCC 29342 / M129 / Subtype 1) (Mycoplasmoides pneumoniae).